The sequence spans 407 residues: Probable tRNA sulfurtransferase (407 aa).

A THUMP domain is found at 61–165 (NEITNRLSKI…LDAIYMYEEV (105 aa)). Residues 183–184 (ML), 208–209 (HF), arginine 265, glycine 287, and glutamine 296 contribute to the ATP site.

The protein belongs to the ThiI family.

It is found in the cytoplasm. It carries out the reaction [ThiI sulfur-carrier protein]-S-sulfanyl-L-cysteine + a uridine in tRNA + 2 reduced [2Fe-2S]-[ferredoxin] + ATP + H(+) = [ThiI sulfur-carrier protein]-L-cysteine + a 4-thiouridine in tRNA + 2 oxidized [2Fe-2S]-[ferredoxin] + AMP + diphosphate. The enzyme catalyses [ThiS sulfur-carrier protein]-C-terminal Gly-Gly-AMP + S-sulfanyl-L-cysteinyl-[cysteine desulfurase] + AH2 = [ThiS sulfur-carrier protein]-C-terminal-Gly-aminoethanethioate + L-cysteinyl-[cysteine desulfurase] + A + AMP + 2 H(+). It participates in cofactor biosynthesis; thiamine diphosphate biosynthesis. Catalyzes the ATP-dependent transfer of a sulfur to tRNA to produce 4-thiouridine in position 8 of tRNAs, which functions as a near-UV photosensor. Also catalyzes the transfer of sulfur to the sulfur carrier protein ThiS, forming ThiS-thiocarboxylate. This is a step in the synthesis of thiazole, in the thiamine biosynthesis pathway. The sulfur is donated as persulfide by IscS. The sequence is that of Probable tRNA sulfurtransferase from Staphylococcus aureus (strain MRSA252).